Reading from the N-terminus, the 302-residue chain is GLABROUS1 enhancer-binding protein (302 aa).

2 disordered regions span residues 1–55 (MVTP…MKKK) and 158–229 (GQGD…NDDD). S27 is subject to Phosphoserine. Basic and acidic residues predominate over residues 180 to 195 (RTNESGEEMLKEHEEE). A compositionally biased stretch (polar residues) spans 208-217 (AKTTENGTSS). A non-canonical leucine-zipper region spans residues 270–291 (LSDEWKALCVEETRFNIKKLRF).

This sequence belongs to the GeBP family. In terms of assembly, homo- and heterodimers. Interacts with GPL1, GPL2 and GPL3. Interacts with KIN10, KIN11 and FLZ4. Interacts with KIN10 and KIN11 via its N-terminal part. Interacts with GPL1 and GPL3 via its C-terminal part. Expressed in the apical meristem and young leaf primordia. Not detected in emerging or mature leaves. Detected in the vascular tissues of cotyledons and leaves, in hydathodes and at the base of flowers and siliques, but not in roots.

Its subcellular location is the nucleus. The protein resides in the nucleolus. In terms of biological role, DNA-binding protein, which specifically recognizes the GL1 enhancer sequence. May be involved in leaf initiation. May play redundant roles with GPL1 and GPL2 in cytokinin responses by regulating the transcript levels of type-A ARR response genes. Involved in stress responses. Plays a repressive role in cell expansion by counteracting the positive role of CPR5 in this process, but does not regulate cell proliferation or endoreduplication. May play a role in plant defense. This is GLABROUS1 enhancer-binding protein from Arabidopsis thaliana (Mouse-ear cress).